A 284-amino-acid chain; its full sequence is 2-dehydro-3-deoxyphosphooctonate aldolase (284 aa).

It belongs to the KdsA family.

It localises to the cytoplasm. The catalysed reaction is D-arabinose 5-phosphate + phosphoenolpyruvate + H2O = 3-deoxy-alpha-D-manno-2-octulosonate-8-phosphate + phosphate. It functions in the pathway carbohydrate biosynthesis; 3-deoxy-D-manno-octulosonate biosynthesis; 3-deoxy-D-manno-octulosonate from D-ribulose 5-phosphate: step 2/3. The protein operates within bacterial outer membrane biogenesis; lipopolysaccharide biosynthesis. This chain is 2-dehydro-3-deoxyphosphooctonate aldolase, found in Vibrio vulnificus (strain CMCP6).